Consider the following 604-residue polypeptide: Serine/threonine-protein kinase A-Raf (604 aa).

The 73-residue stretch at 19 to 91 (GTVKVYLPNK…DGEELIVEVL (73 aa)) folds into the RBD domain. The segment at 98 to 144 (MHNFVRKTFFSLAFCDFCLKFLFHGFRCQTCGYKFHQHCSSKVPTVC) adopts a Phorbol-ester/DAG-type zinc-finger fold. 8 residues coordinate Zn(2+): His99, Cys112, Cys115, Cys125, Cys128, His133, Cys136, and Cys144. Phosphoserine occurs at positions 157 and 162. Disordered regions lie at residues 177 to 222 (NELL…HMVS) and 241 to 288 (TDAA…EKKK). Position 181 is a phosphothreonine (Thr181). Ser186 carries the post-translational modification Phosphoserine. Polar residues predominate over residues 210-222 (IRSTSTPNVHMVS). Residues 252–265 (PRGSPSPASVSSGR) show a composition bias toward low complexity. Ser255 and Ser267 each carry phosphoserine. Basic and acidic residues predominate over residues 272-287 (LPSEQRERKSLADEKK). The Protein kinase domain maps to 308–568 (VQLLKRIGTG…PQILATIELL (261 aa)). ATP contacts are provided by residues 314–322 (IGTGSFGTV) and Lys334. A Phosphothreonine modification is found at Thr316. The active-site Proton acceptor is the Asp427.

It belongs to the protein kinase superfamily. TKL Ser/Thr protein kinase family. RAF subfamily. As to quaternary structure, interacts with TH1L/NELFD. It depends on Zn(2+) as a cofactor. Dephosphorylation by the SHOC2-MRAS-PP1c (SMP) complex consisting of SHOC2, GTP-bound M-Ras/MRAS and the catalytic subunit of protein phosphatase 1 (PPP1CA, PPP1CB or PPP1CC); this relieves inactivation and stimulates kinase activity.

The enzyme catalyses L-seryl-[protein] + ATP = O-phospho-L-seryl-[protein] + ADP + H(+). The catalysed reaction is L-threonyl-[protein] + ATP = O-phospho-L-threonyl-[protein] + ADP + H(+). Its function is as follows. Involved in the transduction of mitogenic signals from the cell membrane to the nucleus. May also regulate the TOR signaling cascade. Phosphorylates PFKFB2. This Mus musculus (Mouse) protein is Serine/threonine-protein kinase A-Raf (Araf).